The primary structure comprises 239 residues: tRNA (guanine-N(1)-)-methyltransferase (239 aa).

S-adenosyl-L-methionine is bound by residues glycine 108 and 127–132; that span reads LGDFVL.

It belongs to the RNA methyltransferase TrmD family. As to quaternary structure, homodimer.

It is found in the cytoplasm. The catalysed reaction is guanosine(37) in tRNA + S-adenosyl-L-methionine = N(1)-methylguanosine(37) in tRNA + S-adenosyl-L-homocysteine + H(+). Functionally, specifically methylates guanosine-37 in various tRNAs. This is tRNA (guanine-N(1)-)-methyltransferase from Streptococcus pyogenes serotype M6 (strain ATCC BAA-946 / MGAS10394).